The following is a 119-amino-acid chain: Large ribosomal subunit protein bL20c (119 aa).

Belongs to the bacterial ribosomal protein bL20 family.

The protein localises to the plastid. The protein resides in the chloroplast. Functionally, binds directly to 23S ribosomal RNA and is necessary for the in vitro assembly process of the 50S ribosomal subunit. It is not involved in the protein synthesizing functions of that subunit. This Oedogonium cardiacum (Filamentous green alga) protein is Large ribosomal subunit protein bL20c.